Consider the following 63-residue polypeptide: Cecropin-A1 (63 aa).

Positions 1–19 (MNFYNIFVFVALILAITIG) are cleaved as a signal peptide. The residue at position 62 (Arg-62) is an Arginine amide.

The protein belongs to the cecropin family.

Its subcellular location is the secreted. Functionally, cecropins have lytic and antibacterial activity against several Gram-positive and Gram-negative bacteria. In Drosophila simulans (Fruit fly), this protein is Cecropin-A1 (CecA1).